The primary structure comprises 83 residues: Small ribosomal subunit protein uS17c (83 aa).

It belongs to the universal ribosomal protein uS17 family. As to quaternary structure, part of the 30S ribosomal subunit.

Its subcellular location is the plastid. It is found in the chloroplast. Functionally, one of the primary rRNA binding proteins, it binds specifically to the 5'-end of 16S ribosomal RNA. In Porphyra purpurea (Red seaweed), this protein is Small ribosomal subunit protein uS17c (rps17).